Consider the following 329-residue polypeptide: GTPase Obg (329 aa).

The Obg domain maps to 1-159; sequence MQFIDQARIT…WPLQLELKLL (159 aa). In terms of domain architecture, OBG-type G spans 160–328; that stretch reads AEVGIIGLPN…LLDQVWQLLG (169 aa). Residues 166 to 173, 191 to 195, 213 to 216, 280 to 283, and 309 to 311 each bind ATP; these read GLPNAGKS, FTTLV, DIPG, NKLE, and SAV. Residues serine 173 and threonine 193 each coordinate Mg(2+).

This sequence belongs to the TRAFAC class OBG-HflX-like GTPase superfamily. OBG GTPase family. In terms of assembly, monomer. Requires Mg(2+) as cofactor.

The protein localises to the cytoplasm. Its function is as follows. An essential GTPase which binds GTP, GDP and possibly (p)ppGpp with moderate affinity, with high nucleotide exchange rates and a fairly low GTP hydrolysis rate. Plays a role in control of the cell cycle, stress response, ribosome biogenesis and in those bacteria that undergo differentiation, in morphogenesis control. The polypeptide is GTPase Obg (Synechococcus sp. (strain WH7803)).